A 153-amino-acid chain; its full sequence is Peptide methionine sulfoxide reductase MsrA (153 aa).

C10 is an active-site residue.

The protein belongs to the MsrA Met sulfoxide reductase family.

The enzyme catalyses L-methionyl-[protein] + [thioredoxin]-disulfide + H2O = L-methionyl-(S)-S-oxide-[protein] + [thioredoxin]-dithiol. It catalyses the reaction [thioredoxin]-disulfide + L-methionine + H2O = L-methionine (S)-S-oxide + [thioredoxin]-dithiol. Its function is as follows. Has an important function as a repair enzyme for proteins that have been inactivated by oxidation. Catalyzes the reversible oxidation-reduction of methionine sulfoxide in proteins to methionine. The protein is Peptide methionine sulfoxide reductase MsrA of Methanococcoides burtonii (strain DSM 6242 / NBRC 107633 / OCM 468 / ACE-M).